The chain runs to 217 residues: Thymidylate kinase (217 aa).

Gly11 to Ser18 contacts ATP.

It belongs to the thymidylate kinase family.

The catalysed reaction is dTMP + ATP = dTDP + ADP. Its function is as follows. Phosphorylation of dTMP to form dTDP in both de novo and salvage pathways of dTTP synthesis. The chain is Thymidylate kinase from Alkalilimnicola ehrlichii (strain ATCC BAA-1101 / DSM 17681 / MLHE-1).